Reading from the N-terminus, the 226-residue chain is MSAILKATNINKIYDEGAVSTQVLTGLDLTVNAGERIAIVGTSGSGKSTLLHLLGGLDTPTSGEVWLHGQLLNSMNETERGAMRNKHLGFIYQFHHLLAEFTAVENVAMPLLMRSEVSTAEARQQAIDILNSVGLEHRLAHRPGELSGGERQRVAIARALVTKPSLILADEPTGNLDYDNAQSVFGLLSELQSTMQTALLMVTHDRNLAALADRQLLLRNGHWENY.

Residues 5–226 form the ABC transporter domain; sequence LKATNINKIY…LLRNGHWENY (222 aa). 41–48 is an ATP binding site; sequence GTSGSGKS.

It belongs to the ABC transporter superfamily. Lipoprotein translocase (TC 3.A.1.125) family. As to quaternary structure, the complex is composed of two ATP-binding proteins (LolD) and two transmembrane proteins (LolC and LolE).

The protein localises to the cell inner membrane. Its function is as follows. Part of the ABC transporter complex LolCDE involved in the translocation of mature outer membrane-directed lipoproteins, from the inner membrane to the periplasmic chaperone, LolA. Responsible for the formation of the LolA-lipoprotein complex in an ATP-dependent manner. This Psychrobacter arcticus (strain DSM 17307 / VKM B-2377 / 273-4) protein is Lipoprotein-releasing system ATP-binding protein LolD.